A 192-amino-acid polypeptide reads, in one-letter code: dTTP/UTP pyrophosphatase (192 aa).

D75 functions as the Proton acceptor in the catalytic mechanism.

The protein belongs to the Maf family. YhdE subfamily. The cofactor is a divalent metal cation.

The protein localises to the cytoplasm. The enzyme catalyses dTTP + H2O = dTMP + diphosphate + H(+). The catalysed reaction is UTP + H2O = UMP + diphosphate + H(+). In terms of biological role, nucleoside triphosphate pyrophosphatase that hydrolyzes dTTP and UTP. May have a dual role in cell division arrest and in preventing the incorporation of modified nucleotides into cellular nucleic acids. In Bdellovibrio bacteriovorus (strain ATCC 15356 / DSM 50701 / NCIMB 9529 / HD100), this protein is dTTP/UTP pyrophosphatase.